A 134-amino-acid polypeptide reads, in one-letter code: D-ribose pyranase (134 aa).

The Proton donor role is filled by histidine 20. Residues aspartate 28, histidine 101, and 123–125 (YCN) each bind substrate.

Belongs to the RbsD / FucU family. RbsD subfamily. As to quaternary structure, homodecamer.

It localises to the cytoplasm. The enzyme catalyses beta-D-ribopyranose = beta-D-ribofuranose. It functions in the pathway carbohydrate metabolism; D-ribose degradation; D-ribose 5-phosphate from beta-D-ribopyranose: step 1/2. Catalyzes the interconversion of beta-pyran and beta-furan forms of D-ribose. The polypeptide is D-ribose pyranase (Pseudomonas fluorescens (strain Pf0-1)).